A 473-amino-acid polypeptide reads, in one-letter code: N-lysine methyltransferase SETD6 (473 aa).

The interval 1–23 (MAAPAKRARVSGGSPLVAPCPSP) is disordered. 2 positions are modified to phosphoserine: S14 and S22. Residues 62 to 286 (PKVTVSRQGT…EGHEIFNTYG (225 aa)) enclose the SET domain. The residue at position 63 (K63) is an N6-methylated lysine; by autocatalysis. Residue 73–75 (AGY) coordinates S-adenosyl-L-methionine. W122 provides a ligand contact to substrate. K179 carries the post-translational modification N6-methylated lysine; by autocatalysis. Position 223 (Y223) interacts with S-adenosyl-L-methionine. S224 and Q226 together coordinate substrate. S-adenosyl-L-methionine is bound by residues 251–252 (NH) and Y297. N6-methylated lysine; by autocatalysis is present on K372.

Belongs to the class V-like SAM-binding methyltransferase superfamily. Histone-lysine methyltransferase family. SETD6 subfamily. In terms of assembly, monomer, homodimer and homotrimer; these structures are stabilized in the presence of S-adenosyl-L-methionine (SAM). Automethylated.

The protein resides in the nucleus. It carries out the reaction L-lysyl-[protein] + S-adenosyl-L-methionine = N(6)-methyl-L-lysyl-[protein] + S-adenosyl-L-homocysteine + H(+). The enzyme catalyses L-lysyl(8)-[histone H2AZ] + S-adenosyl-L-methionine = N(6)-methyl-L-lysyl(8)-[histone H2AZ] + S-adenosyl-L-homocysteine + H(+). Its function is as follows. Protein-lysine N-methyltransferase. Monomethylates 'Lys-310' of the RELA subunit of NF-kappa-B complex, leading to down-regulation of NF-kappa-B transcription factor activity. Monomethylates 'Lys-8' of H2AZ (H2AZK8me1). Required for the maintenance of embryonic stem cell self-renewal. Methylates PAK4. This is N-lysine methyltransferase SETD6 (Setd6) from Mus musculus (Mouse).